Here is a 780-residue protein sequence, read N- to C-terminus: Protein AMEIOTIC 1 (780 aa).

2 disordered regions span residues 32-60 (KKKT…SPLS) and 237-327 (APKE…RWSA). The span at 50 to 60 (DSTIQPRSPLS) shows a compositional bias: polar residues. 2 stretches are compositionally biased toward basic and acidic residues: residues 263–291 (EVKR…EGKK) and 309–327 (RTVE…RWSA). Residues 448–547 (VEELTEEVNG…LEEQVTYLSS (100 aa)) adopt a coiled-coil conformation.

The protein localises to the nucleus. It localises to the chromosome. In terms of biological role, plays a fundamental role in building the proper chromosome structure at the beginning of meiosis in male meiocytes. Required for the transition from leptotene to zygotene in meiocytes. Required for homologous chromosome pairing, and initiation and progression of meiotic recombination. Regulates meiocyte cytoskeleton organization. The protein is Protein AMEIOTIC 1 of Zea mays (Maize).